Reading from the N-terminus, the 261-residue chain is Imidazole glycerol phosphate synthase subunit HisF (261 aa).

Active-site residues include Asp-11 and Asp-130.

The protein belongs to the HisA/HisF family. As to quaternary structure, heterodimer of HisH and HisF.

It is found in the cytoplasm. It carries out the reaction 5-[(5-phospho-1-deoxy-D-ribulos-1-ylimino)methylamino]-1-(5-phospho-beta-D-ribosyl)imidazole-4-carboxamide + L-glutamine = D-erythro-1-(imidazol-4-yl)glycerol 3-phosphate + 5-amino-1-(5-phospho-beta-D-ribosyl)imidazole-4-carboxamide + L-glutamate + H(+). It functions in the pathway amino-acid biosynthesis; L-histidine biosynthesis; L-histidine from 5-phospho-alpha-D-ribose 1-diphosphate: step 5/9. IGPS catalyzes the conversion of PRFAR and glutamine to IGP, AICAR and glutamate. The HisF subunit catalyzes the cyclization activity that produces IGP and AICAR from PRFAR using the ammonia provided by the HisH subunit. The chain is Imidazole glycerol phosphate synthase subunit HisF from Heliobacterium mobile (Heliobacillus mobilis).